Reading from the N-terminus, the 73-residue chain is TKCYVTPDATSQTCPDGQDICYTKTWCDGFCSSRGKRIDLGCAATCPKVKPGVDIKCCSTDNCNPFPTWKRKH.

5 cysteine pairs are disulfide-bonded: Cys3–Cys21, Cys14–Cys42, Cys27–Cys31, Cys46–Cys57, and Cys58–Cys63.

The protein belongs to the three-finger toxin family. Long-chain subfamily. Type II alpha-neurotoxin sub-subfamily. As to expression, expressed by the venom gland.

The protein resides in the secreted. Its function is as follows. Binds with high affinity to muscular (alpha-1/CHRNA1) and neuronal (alpha-7/CHRNA7) nicotinic acetylcholine receptor (nAChR) and inhibits acetylcholine from binding to the receptor, thereby impairing neuromuscular and neuronal transmission. The polypeptide is Long neurotoxin 2 (Ophiophagus hannah (King cobra)).